We begin with the raw amino-acid sequence, 314 residues long: Ribosomal RNA small subunit methyltransferase H (314 aa).

Residues Gly-35–His-37, Asp-55, Phe-79, Asp-101, and Gln-108 each bind S-adenosyl-L-methionine. Positions Gln-276–Ala-296 are disordered.

The protein belongs to the methyltransferase superfamily. RsmH family.

The protein resides in the cytoplasm. The enzyme catalyses cytidine(1402) in 16S rRNA + S-adenosyl-L-methionine = N(4)-methylcytidine(1402) in 16S rRNA + S-adenosyl-L-homocysteine + H(+). Its function is as follows. Specifically methylates the N4 position of cytidine in position 1402 (C1402) of 16S rRNA. This chain is Ribosomal RNA small subunit methyltransferase H, found in Pectobacterium atrosepticum (strain SCRI 1043 / ATCC BAA-672) (Erwinia carotovora subsp. atroseptica).